The following is a 480-amino-acid chain: UDP-glycosyltransferase 72B2 (480 aa).

UDP-alpha-D-glucose-binding positions include Ser-277, 347–349 (APQ), 364–372 (HCGWNSTLE), and 386–389 (FAEQ).

The protein belongs to the UDP-glycosyltransferase family.

The sequence is that of UDP-glycosyltransferase 72B2 (UGT72B2) from Arabidopsis thaliana (Mouse-ear cress).